The primary structure comprises 251 residues: MNDFVFSDIPDNVKPMASVEFDDPLTIATGDVLNWTLWLTRNFPALSSIIMRLPSSLVSMVTSSFEGANQMVQVKTSTHNLYSLSLPTHARKQIISQLVEHEKNHIGPKSKDCVMQRLLNAHRDSESKISIPTPDATLRSEAVGFTLAGTADPPNILALGTFMAARDSEMQKGLYKELKAIWPDLRSPAPSYNLLHQLPLLRGIIKESIRFTHGVATGPARLVGAGGARIGGYNVPAKASSFSAAATSDCS.

Heme is bound at residue C250.

This sequence belongs to the cytochrome P450 family. Heme serves as cofactor.

It participates in secondary metabolite biosynthesis. Its function is as follows. Cytochrome P450 monooxygenase; part of the gene cluster that mediates the biosynthesis of pyrrolopyrazines, secondary metabolites showing insecticidal activity. The role of ppzG within the pathway has still to be determined. The single multifunctional NRPS ppzA is sufficient to produce peramine via condensation of 1-pyrroline-5-carboxylate and arginine, N-methylation of the alpha-amino group of arginine and reduction of the thioester and the cyclization to form an iminium ion resulting in release from the peptide synthetase. Deprotonation of this intermediate and oxidation of the pyrroline ring would give rise to peramine. In Epichloe species that produce only peramine, the peramine synthetase gene is not localized in a gene cluster, in contrast to Metarhizium species that contain additional pyrrolopyrazine biosynthesis genes. The 2-oxoglutarate-Fe(II) type oxidoreductase ppzC hydroxylates peramine to yield the newly identified compound 8-hydroxyperamine whereas ppzD converts L-proline into trans-4-hydroxy-L-proline, a precursor of peramine biosynthesis. This Metarhizium rileyi (strain RCEF 4871) (Nomuraea rileyi) protein is Cytochrome P450 monooxygenase ppzG.